The following is a 201-amino-acid chain: Holliday junction branch migration complex subunit RuvA (201 aa).

The interval 1-63 (MIASVRGEVL…EDSMTLYGFA (63 aa)) is domain I. Residues 64–142 (DTEARDLFGL…LVPVQAGPPG (79 aa)) are domain II. The flexible linker stretch occupies residues 143–153 (STPAVAATPVR). The tract at residues 153–201 (REQVVEALTGLGFPLKQAEQALDTVLAEQPAADTSTALRAALSLLGKNR) is domain III.

This sequence belongs to the RuvA family. Homotetramer. Forms an RuvA(8)-RuvB(12)-Holliday junction (HJ) complex. HJ DNA is sandwiched between 2 RuvA tetramers; dsDNA enters through RuvA and exits via RuvB. An RuvB hexamer assembles on each DNA strand where it exits the tetramer. Each RuvB hexamer is contacted by two RuvA subunits (via domain III) on 2 adjacent RuvB subunits; this complex drives branch migration. In the full resolvosome a probable DNA-RuvA(4)-RuvB(12)-RuvC(2) complex forms which resolves the HJ.

The protein resides in the cytoplasm. Its function is as follows. The RuvA-RuvB-RuvC complex processes Holliday junction (HJ) DNA during genetic recombination and DNA repair, while the RuvA-RuvB complex plays an important role in the rescue of blocked DNA replication forks via replication fork reversal (RFR). RuvA specifically binds to HJ cruciform DNA, conferring on it an open structure. The RuvB hexamer acts as an ATP-dependent pump, pulling dsDNA into and through the RuvAB complex. HJ branch migration allows RuvC to scan DNA until it finds its consensus sequence, where it cleaves and resolves the cruciform DNA. This is Holliday junction branch migration complex subunit RuvA from Nocardia farcinica (strain IFM 10152).